Here is a 248-residue protein sequence, read N- to C-terminus: Probable transcriptional regulatory protein RPC_4807 (248 aa).

Positions 1-21 (MAGHSQFKNIMHRKGRQDAQK) are disordered.

This sequence belongs to the TACO1 family.

Its subcellular location is the cytoplasm. The sequence is that of Probable transcriptional regulatory protein RPC_4807 from Rhodopseudomonas palustris (strain BisB18).